Here is a 632-residue protein sequence, read N- to C-terminus: Mediator of RNA polymerase II transcription subunit 17 (632 aa).

2 disordered regions span residues 1–21 (MSDS…RPDS) and 50–72 (EDKH…DLET). The span at 11–21 (PIREKRDRPDS) shows a compositional bias: basic and acidic residues. Residues 58 to 72 (EEDDEGDKESTDLET) show a composition bias toward acidic residues.

The protein belongs to the Mediator complex subunit 17 family. Component of the Mediator complex.

It localises to the nucleus. Its function is as follows. Component of the Mediator complex, a coactivator involved in the regulated transcription of nearly all RNA polymerase II-dependent genes. Mediator functions as a bridge to convey information from gene-specific regulatory proteins to the basal RNA polymerase II transcription machinery. Mediator is recruited to promoters by direct interactions with regulatory proteins and serves as a scaffold for the assembly of a functional preinitiation complex with RNA polymerase II and the general transcription factors. This chain is Mediator of RNA polymerase II transcription subunit 17 (srb4), found in Emericella nidulans (strain FGSC A4 / ATCC 38163 / CBS 112.46 / NRRL 194 / M139) (Aspergillus nidulans).